A 668-amino-acid polypeptide reads, in one-letter code: Transketolase (668 aa).

Residue His-28 coordinates substrate. Residues His-68 and 116 to 118 (GPL) each bind thiamine diphosphate. Mg(2+) is bound at residue Asp-157. Residues Gly-158 and Asn-187 each coordinate thiamine diphosphate. Mg(2+) contacts are provided by Asn-187 and Ile-189. Substrate-binding residues include His-263, Arg-358, and Ser-385. Residue His-263 coordinates thiamine diphosphate. Glu-412 (proton donor) is an active-site residue. Phe-438 is a thiamine diphosphate binding site. Substrate is bound by residues His-462, Asp-470, His-474, and Arg-521.

This sequence belongs to the transketolase family. Homodimer. It depends on Mg(2+) as a cofactor. Requires thiamine diphosphate as cofactor.

The enzyme catalyses D-sedoheptulose 7-phosphate + D-glyceraldehyde 3-phosphate = aldehydo-D-ribose 5-phosphate + D-xylulose 5-phosphate. Functionally, catalyzes the transfer of a two-carbon ketol group from a ketose donor to an aldose acceptor, likely via a covalent intermediate with the cofactor thiamine pyrophosphate. Can use L-erythrulose as donor and D-ribose-5-phosphate as acceptor substrates, forming glycolaldehyde and D-sedoheptulose-7-phosphate. For synthetic purposes, is able to use hydroxypyruvate (HPA) as donor substrate, making the reaction irreversible due to the release of carbon dioxide, and various aldehydes as acceptor substrates, which leads to the corresponding ketoses. Thus, using hydroxypyruvate as donor and three different aldehydes as acceptors, i.e. glycolaldehyde, D-glyceraldehyde and butyraldehyde, the enzyme stereoselectively forms the corresponding products L-erythrulose, D-xylulose and (3S)-1,3-dihydroxyhexan-2-one, respectively. This is Transketolase from Geobacillus stearothermophilus (Bacillus stearothermophilus).